We begin with the raw amino-acid sequence, 109 residues long: Large ribosomal subunit protein uL24 (109 aa).

This sequence belongs to the universal ribosomal protein uL24 family. As to quaternary structure, part of the 50S ribosomal subunit.

Functionally, one of two assembly initiator proteins, it binds directly to the 5'-end of the 23S rRNA, where it nucleates assembly of the 50S subunit. In terms of biological role, one of the proteins that surrounds the polypeptide exit tunnel on the outside of the subunit. The protein is Large ribosomal subunit protein uL24 of Rickettsia bellii (strain RML369-C).